Consider the following 445-residue polypeptide: MSDQASKPAPAVKKLFIKTYGCQMNVYDSQRMAEAMGAEGYVLTENQSDADMVLLNTCHIREKAAEKLYSDLGRLKPLKAERPDLKIGVAGCVAQAEGEEIQRRMPIVDLVVGPQAYHRLPAMARAGRGVDTEFPAEDKFEHLPKPAATRRAPAAFLTVQEGCDKFCAFCVVPYTRGAEVSRPVSRILAEARDLVARGVREITLLGQNVNGWHGEGPEGSEWGFGRLIRAIAEIDGLDRIRYTTSHPNDMADDLIAAHRDEPKLMPYLHLPVQSGSDRILKAMNRRHTVDQYLRLIERIREARPDIMLTSDFIVGFPGETDQDHQGTLELVRAVNFGTAFSFKYSPRPGTPAYERPEIEGAVADARLQELQALLTSQQKAAQEGMVGRELGVLFEKPGRNPGQMVGKSDYLHAVFVEAPAAKVGDLVRVRITHSAPNSLAGVLAA.

Residues 13–129 (KKLFIKTYGC…LPAMARAGRG (117 aa)) form the MTTase N-terminal domain. [4Fe-4S] cluster-binding residues include Cys22, Cys58, Cys92, Cys163, Cys167, and Cys170. Positions 149 to 383 (TRRAPAAFLT…LTSQQKAAQE (235 aa)) constitute a Radical SAM core domain. The TRAM domain occupies 383–445 (EGMVGRELGV…PNSLAGVLAA (63 aa)).

The protein belongs to the methylthiotransferase family. MiaB subfamily. Monomer. [4Fe-4S] cluster serves as cofactor.

It localises to the cytoplasm. The catalysed reaction is N(6)-dimethylallyladenosine(37) in tRNA + (sulfur carrier)-SH + AH2 + 2 S-adenosyl-L-methionine = 2-methylsulfanyl-N(6)-dimethylallyladenosine(37) in tRNA + (sulfur carrier)-H + 5'-deoxyadenosine + L-methionine + A + S-adenosyl-L-homocysteine + 2 H(+). Its function is as follows. Catalyzes the methylthiolation of N6-(dimethylallyl)adenosine (i(6)A), leading to the formation of 2-methylthio-N6-(dimethylallyl)adenosine (ms(2)i(6)A) at position 37 in tRNAs that read codons beginning with uridine. This chain is tRNA-2-methylthio-N(6)-dimethylallyladenosine synthase, found in Paracoccus denitrificans (strain Pd 1222).